The following is a 479-amino-acid chain: Putative L-cysteine desulfhydrase 2 (479 aa).

A disordered region spans residues 1–36 (MASLQSGGDAAANGVDADVDGAASPPSAKRPRAGAG). Over residues 7–36 (GGDAAANGVDADVDGAASPPSAKRPRAGAG) the composition is skewed to low complexity. Lys-270 is subject to N6-(pyridoxal phosphate)lysine.

Belongs to the class-V pyridoxal-phosphate-dependent aminotransferase family. The cofactor is pyridoxal 5'-phosphate.

It carries out the reaction L-cysteine + H2O = hydrogen sulfide + pyruvate + NH4(+) + H(+). Catalyzes the production of hydrogen sulfide (H2S) from cysteine. The protein is Putative L-cysteine desulfhydrase 2 of Oryza sativa subsp. japonica (Rice).